The primary structure comprises 475 residues: Ankyrin repeat, SAM and basic leucine zipper domain-containing protein 1 (475 aa).

The tract at residues 1-23 is disordered; sequence MAAARFRGLAVAGGGESSESEDD. 3 positions are modified to phosphoserine: S17, S18, and S20. ANK repeat units follow at residues 45 to 74, 78 to 107, 110 to 144, 148 to 177, 181 to 210, and 214 to 243; these read EKNE…SVDS, YGWT…KASF, DKQT…DPNV, RLMT…EVNT, NGYT…NKML, and DGKT…PLEG. Residues 272–334 enclose the SAM domain; sequence SYTAFGDLEI…KILAALKELE (63 aa).

In terms of assembly, interacts with DDX4, PIWIL1, RANBP9 and TDRD1.

Its subcellular location is the cytoplasm. Plays a central role during spermatogenesis by repressing transposable elements and preventing their mobilization, which is essential for the germline integrity. Acts via the piRNA metabolic process, which mediates the repression of transposable elements during meiosis by forming complexes composed of piRNAs and Piwi proteins and governs the methylation and subsequent repression of transposons. Its association with pi-bodies suggests a participation in the primary piRNAs metabolic process. Required prior to the pachytene stage to facilitate the production of multiple types of piRNAs, including those associated with repeats involved in the regulation of retrotransposons. May act by mediating protein-protein interactions during germ cell maturation. This chain is Ankyrin repeat, SAM and basic leucine zipper domain-containing protein 1 (ASZ1), found in Equus caballus (Horse).